The primary structure comprises 94 residues: Large ribosomal subunit protein uL29 (94 aa).

A disordered region spans residues 65-94 (ANPGERKSRVFSRAKRKKKNLARLSAKAKG). Residues 73–94 (RVFSRAKRKKKNLARLSAKAKG) are compositionally biased toward basic residues.

This sequence belongs to the universal ribosomal protein uL29 family.

This chain is Large ribosomal subunit protein uL29, found in Leptospira interrogans serogroup Icterohaemorrhagiae serovar copenhageni (strain Fiocruz L1-130).